A 645-amino-acid chain; its full sequence is ATP-dependent zinc metalloprotease FtsH (645 aa).

Residues 1–6 (MDQRPK) lie on the Cytoplasmic side of the membrane. A helical membrane pass occupies residues 7-27 (FGMILFYIVLGVFLMVALRGL). Topologically, residues 28–110 (YTTDTNLSVP…VVYEKGNDSL (83 aa)) are periplasmic. A helical transmembrane segment spans residues 111–131 (FWVNLLGTIIPLAIIVFIWFF). The Cytoplasmic segment spans residues 132–645 (AMRSLSGRNS…AKEGNEDEKN (514 aa)). 204–211 (GPPGTGKT) is a binding site for ATP. His-426 is a Zn(2+) binding site. Glu-427 is a catalytic residue. Zn(2+) contacts are provided by His-430 and Asp-503. Residues 623-645 (SKRKVSAVSTNEEAKEGNEDEKN) form a disordered region. Residues 634-645 (EEAKEGNEDEKN) are compositionally biased toward basic and acidic residues.

This sequence in the central section; belongs to the AAA ATPase family. The protein in the C-terminal section; belongs to the peptidase M41 family. In terms of assembly, homohexamer. It depends on Zn(2+) as a cofactor.

It is found in the cell inner membrane. In terms of biological role, acts as a processive, ATP-dependent zinc metallopeptidase for both cytoplasmic and membrane proteins. Plays a role in the quality control of integral membrane proteins. The polypeptide is ATP-dependent zinc metalloprotease FtsH (Kosmotoga olearia (strain ATCC BAA-1733 / DSM 21960 / TBF 19.5.1)).